Consider the following 201-residue polypeptide: Glutathione peroxidase 1 (201 aa).

Ser-32 is modified (phosphoserine). Residue Sec-47 is part of the active site. Sec-47 is a non-standard amino acid (selenocysteine). An N6-acetyllysine; alternate mark is found at Lys-86 and Lys-112. 2 positions are modified to N6-succinyllysine; alternate: Lys-86 and Lys-112. The residue at position 119 (Lys-119) is an N6-acetyllysine. N6-acetyllysine; alternate is present on Lys-146. Lys-146 carries the N6-succinyllysine; alternate modification. Phosphoserine occurs at positions 195 and 199.

Belongs to the glutathione peroxidase family. Homotetramer. Interacts with MIEN1. During periods of oxidative stress, Sec-47 may react with a superoxide radical, irreversibly lose hydroselenide and be converted to dehydroalanine. As to expression, expressed in liver and lung.

It localises to the cytoplasm. The protein localises to the mitochondrion. It carries out the reaction 2 glutathione + H2O2 = glutathione disulfide + 2 H2O. The catalysed reaction is a hydroperoxy polyunsaturated fatty acid + 2 glutathione = a hydroxy polyunsaturated fatty acid + glutathione disulfide + H2O. It catalyses the reaction tert-butyl hydroperoxide + 2 glutathione = tert-butanol + glutathione disulfide + H2O. The enzyme catalyses cumene hydroperoxide + 2 glutathione = 2-phenylpropan-2-ol + glutathione disulfide + H2O. It carries out the reaction (13S)-hydroperoxy-(9Z,11E)-octadecadienoate + 2 glutathione = (13S)-hydroxy-(9Z,11E)-octadecadienoate + glutathione disulfide + H2O. The catalysed reaction is (9S)-hydroperoxy-(10E,12Z)-octadecadienoate + 2 glutathione = (9S)-hydroxy-(10E,12Z)-octadecadienoate + glutathione disulfide + H2O. It catalyses the reaction (5S)-hydroperoxy-(6E,8Z,11Z,14Z)-eicosatetraenoate + 2 glutathione = (5S)-hydroxy-(6E,8Z,11Z,14Z)-eicosatetraenoate + glutathione disulfide + H2O. The enzyme catalyses (12S)-hydroperoxy-(5Z,8Z,10E,14Z)-eicosatetraenoate + 2 glutathione = (12S)-hydroxy-(5Z,8Z,10E,14Z)-eicosatetraenoate + glutathione disulfide + H2O. It carries out the reaction (12R)-hydroperoxy-(5Z,8Z,10E,14Z)-eicosatetraenoate + 2 glutathione = (12R)-hydroxy-(5Z,8Z,10E,14Z)-eicosatetraenoate + glutathione disulfide + H2O. The catalysed reaction is (15S)-hydroperoxy-(5Z,8Z,11Z,13E)-eicosatetraenoate + 2 glutathione = (15S)-hydroxy-(5Z,8Z,11Z,13E)-eicosatetraenoate + glutathione disulfide + H2O. It catalyses the reaction (5S)-hydroperoxy-(6E,8Z,11Z,14Z,17Z)-eicosapentaenoate + 2 glutathione = (5S)-hydroxy-(6E,8Z,11Z,14Z,17Z)-eicosapentaenoate + glutathione disulfide + H2O. The enzyme catalyses (12S)-hydroperoxy-(5Z,8Z,10E,14Z,17Z)-eicosapentaenoate + 2 glutathione = (12S)-hydroxy-(5Z,8Z,10E,14Z,17Z)-eicosapentaenoate + glutathione disulfide + H2O. It carries out the reaction (15S)-hydroperoxy-(5Z,8Z,11Z,13E,17Z)-eicosapentaenoate + 2 glutathione = (15S)-hydroxy-(5Z,8Z,11Z,13E,17Z)-eicosapentaenoate + glutathione disulfide + H2O. The catalysed reaction is (15S)-hydroperoxy-(11Z,13E)-eicosadienoate + 2 glutathione = (15S)-hydroxy-(11Z,13E)-eicosadienoate + glutathione disulfide + H2O. It catalyses the reaction (17S)-hydroperoxy-(4Z,7Z,10Z,13Z,15E,19Z)-docosahexaenoate + 2 glutathione = (17S)-hydroxy-(4Z,7Z,10Z,13Z,15E,19Z)-docosahexaenoate + glutathione disulfide + H2O. Catalyzes the reduction of hydroperoxides in a glutathione-dependent manner thus regulating cellular redox homeostasis. Can reduce small soluble hydroperoxides such as H2O2, cumene hydroperoxide and tert-butyl hydroperoxide, as well as several fatty acid-derived hydroperoxides. In platelets catalyzes the reduction of 12-hydroperoxyeicosatetraenoic acid, the primary product of the arachidonate 12-lipoxygenase pathway. The protein is Glutathione peroxidase 1 of Rattus norvegicus (Rat).